The sequence spans 325 residues: ATP phosphoribosyltransferase (325 aa).

Belongs to the ATP phosphoribosyltransferase family. Long subfamily. Requires Mg(2+) as cofactor.

Its subcellular location is the cytoplasm. The catalysed reaction is 1-(5-phospho-beta-D-ribosyl)-ATP + diphosphate = 5-phospho-alpha-D-ribose 1-diphosphate + ATP. Its pathway is amino-acid biosynthesis; L-histidine biosynthesis; L-histidine from 5-phospho-alpha-D-ribose 1-diphosphate: step 1/9. Its activity is regulated as follows. Feedback inhibited by histidine. Functionally, catalyzes the condensation of ATP and 5-phosphoribose 1-diphosphate to form N'-(5'-phosphoribosyl)-ATP (PR-ATP). Has a crucial role in the pathway because the rate of histidine biosynthesis seems to be controlled primarily by regulation of HisG enzymatic activity. The protein is ATP phosphoribosyltransferase of Rhodopseudomonas palustris (strain BisB18).